The chain runs to 130 residues: Small ribosomal subunit protein uS8 (130 aa).

Belongs to the universal ribosomal protein uS8 family. Part of the 30S ribosomal subunit. Contacts proteins S5 and S12.

Functionally, one of the primary rRNA binding proteins, it binds directly to 16S rRNA central domain where it helps coordinate assembly of the platform of the 30S subunit. The polypeptide is Small ribosomal subunit protein uS8 (Aster yellows witches'-broom phytoplasma (strain AYWB)).